Reading from the N-terminus, the 435-residue chain is E3 ubiquitin-protein ligase RNFT1 (435 aa).

The tract at residues 1 to 62 (MPLFLLSLPT…SSEDASTPQC (62 aa)) is disordered. Residues 16-34 (GHERRQRPEAKTSGSEKKY) show a composition bias toward basic and acidic residues. Over residues 40 to 62 (ANRSQLHSPPGTGSSEDASTPQC) the composition is skewed to polar residues. 6 consecutive transmembrane segments (helical) span residues 158-178 (ILIL…LGIG), 203-223 (IQCA…YYTF), 233-253 (IFLN…IVGI), 256-276 (FILK…PSFI), 298-318 (TFVP…FGNV), and 323-343 (LGIL…FGHL). The interval 368–419 (CSDVDDICSICQAEFQKPILLICQHIFCEECMTLWFNREKTCPLCRTVISDH) is required for ubiquitin ligase activity and for protection against ER stress-induced cell death. The RING-type zinc finger occupies 375–413 (CSICQAEFQKPILLICQHIFCEECMTLWFNREKTCPLCR).

In terms of tissue distribution, expressed at highest levels in testis, lower levels in heart, liver, lung, and kidney. Not detected in brain, ovary, and uterus. Down-regulated in testis from patients with maturation arrest (MA) or Sertoli cell-only syndrome (SCOS). Ubiquitously expressed with high expression in testis.

Its subcellular location is the endoplasmic reticulum membrane. The catalysed reaction is S-ubiquitinyl-[E2 ubiquitin-conjugating enzyme]-L-cysteine + [acceptor protein]-L-lysine = [E2 ubiquitin-conjugating enzyme]-L-cysteine + N(6)-ubiquitinyl-[acceptor protein]-L-lysine.. Its pathway is protein modification; protein ubiquitination. E3 ubiquitin-protein ligase that acts in the endoplasmic reticulum (ER)-associated degradation (ERAD) pathway, which targets misfolded proteins that accumulate in the endoplasmic reticulum (ER) for ubiquitination and subsequent proteasome-mediated degradation. Protects cells from ER stress-induced apoptosis. The chain is E3 ubiquitin-protein ligase RNFT1 (RNFT1) from Homo sapiens (Human).